The chain runs to 821 residues: Condensin-2 complex subunit kle-2 (821 aa).

Positions 389–426 (VMQNDEPNTSRRPDENYAPMDFDDDFGGGGDDDDDDYI) are disordered. Residues 409–424 (DFDDDFGGGGDDDDDD) are compositionally biased toward acidic residues. Positions 529 to 561 (TAILAEKKRRIKEKTAKIREARIQNMQRKRTAR) form a coiled coil.

The protein belongs to the CND2 H2 (condensin-2 subunit 2) family. As to quaternary structure, component of the condensin II complex, which contains the mix-1/SMC2 and smc-4/SMC4 heterodimer, and three non SMC subunits, capg-2, kle-2 and hcp-6 that probably regulate the complex. Within the complex, interacts with mix-1, smc-4, capg-2 and hcp-6.

It localises to the nucleus. The protein resides in the chromosome. Its subcellular location is the centromere. Its function is as follows. Regulatory subunit of the condensin II complex, a complex that seems to play a role in prophase chromosome condensation and in chromosome segregation in mitosis and in meiosis. This Caenorhabditis elegans protein is Condensin-2 complex subunit kle-2 (kle-2).